The following is a 196-amino-acid chain: DnaA initiator-associating protein DiaA (196 aa).

In terms of domain architecture, SIS spans 34-196; sequence LVQSLLNGNK…DNTLFPHQDD (163 aa).

The protein belongs to the SIS family. DiaA subfamily. Homotetramer; dimer of dimers.

In terms of biological role, required for the timely initiation of chromosomal replication via direct interactions with the DnaA initiator protein. The chain is DnaA initiator-associating protein DiaA from Shigella flexneri serotype 5b (strain 8401).